The chain runs to 139 residues: Low molecular weight protein-tyrosine-phosphatase PtpB (139 aa).

Catalysis depends on Cys-7, which acts as the Nucleophile. Arg-13 is a catalytic residue. Asp-111 (proton donor) is an active-site residue.

It belongs to the low molecular weight phosphotyrosine protein phosphatase family.

It catalyses the reaction O-phospho-L-tyrosyl-[protein] + H2O = L-tyrosyl-[protein] + phosphate. With respect to regulation, inhibited by N-ethylmaleimide and sodium orthovanadate. Functionally, dephosphorylates the phosphotyrosine-containing proteins. In Staphylococcus aureus, this protein is Low molecular weight protein-tyrosine-phosphatase PtpB (ptpB).